We begin with the raw amino-acid sequence, 196 residues long: PSGKQYECPECGKTFKYKNSLTIHQRGHTEEKPFMCTQCGKCFRQKKALRRHQFIHTGEKPYVCTECEKRFLEKSQLILHQRGHTGEKPFTCTECGESFRHKQVLMRHQFIHTGEKPYECTQCGEGFLLKSKLIHHQRGHTGEKPFMCTECGKGFRQKQVLIEHQFIHTGEKPLMCTDCGKHFRQKHVLRLHKLSH.

C2H2-type zinc fingers lie at residues 6–28 (YECPECGKTFKYKNSLTIHQRGH), 34–56 (FMCTQCGKCFRQKKALRRHQFIH), 62–84 (YVCTECEKRFLEKSQLILHQRGH), 90–112 (FTCTECGESFRHKQVLMRHQFIH), 118–140 (YECTQCGEGFLLKSKLIHHQRGH), 146–168 (FMCTECGKGFRQKQVLIEHQFIH), and 174–196 (LMCTDCGKHFRQKHVLRLHKLSH).

Belongs to the krueppel C2H2-type zinc-finger protein family.

The protein localises to the nucleus. In terms of biological role, may be involved in transcriptional regulation. The protein is Gastrula zinc finger protein XlCGF64.1 of Xenopus laevis (African clawed frog).